A 309-amino-acid polypeptide reads, in one-letter code: Homoserine kinase (309 aa).

ATP is bound at residue 91–101; it reads PIGSGLGSSAC.

The protein belongs to the GHMP kinase family. Homoserine kinase subfamily.

It is found in the cytoplasm. It carries out the reaction L-homoserine + ATP = O-phospho-L-homoserine + ADP + H(+). Its pathway is amino-acid biosynthesis; L-threonine biosynthesis; L-threonine from L-aspartate: step 4/5. Catalyzes the ATP-dependent phosphorylation of L-homoserine to L-homoserine phosphate. In Buchnera aphidicola subsp. Schizaphis graminum (strain Sg), this protein is Homoserine kinase.